Reading from the N-terminus, the 165-residue chain is uncharacterized protein (165 aa).

The Cupin type-1 domain occupies 28–139; that stretch reads QNALKDTGLA…KPNEREEAVK (112 aa).

This is an uncharacterized protein from Bacillus subtilis (strain 168).